The following is a 202-amino-acid chain: Large ribosomal subunit protein bL25 (202 aa).

Belongs to the bacterial ribosomal protein bL25 family. CTC subfamily. Part of the 50S ribosomal subunit; part of the 5S rRNA/L5/L18/L25 subcomplex. Contacts the 5S rRNA. Binds to the 5S rRNA independently of L5 and L18.

Its function is as follows. This is one of the proteins that binds to the 5S RNA in the ribosome where it forms part of the central protuberance. The protein is Large ribosomal subunit protein bL25 of Clostridium perfringens (strain ATCC 13124 / DSM 756 / JCM 1290 / NCIMB 6125 / NCTC 8237 / Type A).